Consider the following 558-residue polypeptide: Formate--tetrahydrofolate ligase (558 aa).

Thr65 to Thr72 lines the ATP pocket.

Belongs to the formate--tetrahydrofolate ligase family.

It catalyses the reaction (6S)-5,6,7,8-tetrahydrofolate + formate + ATP = (6R)-10-formyltetrahydrofolate + ADP + phosphate. Its pathway is one-carbon metabolism; tetrahydrofolate interconversion. The polypeptide is Formate--tetrahydrofolate ligase (Methylobacterium nodulans (strain LMG 21967 / CNCM I-2342 / ORS 2060)).